A 59-amino-acid polypeptide reads, in one-letter code: Aedesin (59 aa).

The N-terminal stretch at 1 to 23 (MNFTKLFAIVLLAALVLLGQTEA) is a signal peptide.

Belongs to the cecropin family. Salivary gland (at protein level).

The protein resides in the secreted. In terms of biological role, antimicrobial peptide. Exhibits antibacterial activity against Gram-negative bacteria, such as Escherichia coli, Pseudomonas aeruginosa, Acinetobacter baumannii and Klebsiella pneumoniae. Shows no antibacterial effects against Gram-positive bacteria, such as Staphylococcus aureus, Enterococcus faecalis and Enterococcus faecium. Exhibits antiviral activity against all four dengue virus serotypes and chikungunya virus. Exhibits leishmanicidal activity. Partially neutralizes lipopolysaccharides (LPS). Exhibits anti-inflammatory properties: inhibits LPS-induced iNOS/NOS2 transcription, nitric oxide (NO) and pro-inflammatory cytokine production in mouse macrophages and human peripheral blood mononuclear cells (PBMCs); inhibits LPS-induced activation of MAPK and NF-kappa-B signaling pathways in mouse macrophages. In Aedes aegypti (Yellowfever mosquito), this protein is Aedesin.